A 481-amino-acid polypeptide reads, in one-letter code: Zinc finger CCCH domain-containing protein 4 (481 aa).

A C3H1-type zinc finger spans residues 157-184 (RNRAHVCSFFIRGECTRGAECPYRHEMP). The region spanning 228 to 301 (KTLYVGGLNS…QRLKLTWGRP (74 aa)) is the RRM domain. Residues 329-481 (HNQPPPMQQY…DVSTATGSSQ (153 aa)) are disordered. A compositionally biased stretch (pro residues) spans 331-345 (QPPPMQQYYMHPPPA). 2 stretches are compositionally biased toward low complexity: residues 369 to 389 (AGGSSTENNGASSSSYMMPPH) and 399 to 410 (YMPSPYQQQYPP). Residues 423 to 444 (APPPAAYPYPQQPGPGSRPAPS) are compositionally biased toward pro residues. Residues 449-471 (SAISPDSAPAGSGAPSGSSQQAP) show a composition bias toward low complexity. Residues 472 to 481 (DVSTATGSSQ) show a composition bias toward polar residues.

The sequence is that of Zinc finger CCCH domain-containing protein 4 from Arabidopsis thaliana (Mouse-ear cress).